Here is a 250-residue protein sequence, read N- to C-terminus: 23S rRNA (guanosine-2'-O-)-methyltransferase RlmB (250 aa).

The S-adenosyl-L-methionine site is built by Gly-198, Ile-218, and Leu-227.

Belongs to the class IV-like SAM-binding methyltransferase superfamily. RNA methyltransferase TrmH family. RlmB subfamily.

It is found in the cytoplasm. It carries out the reaction guanosine(2251) in 23S rRNA + S-adenosyl-L-methionine = 2'-O-methylguanosine(2251) in 23S rRNA + S-adenosyl-L-homocysteine + H(+). In terms of biological role, specifically methylates the ribose of guanosine 2251 in 23S rRNA. In Coxiella burnetii (strain RSA 493 / Nine Mile phase I), this protein is 23S rRNA (guanosine-2'-O-)-methyltransferase RlmB.